Reading from the N-terminus, the 795-residue chain is ATP-dependent RNA helicase DHX15 (795 aa).

The tract at residues 1-111 (MSKRHRLDLG…HTGHTGHTSL (111 aa)) is disordered. The residue at position 15 (Ser-15) is a Phosphoserine. Basic and acidic residues predominate over residues 20–62 (AGTDGKDRERDRDREDRSKDRDRERDRGDREREREKEKEKELR). Residues 79–110 (ASHSAHSTHSAHSTHSTHSAHSTHTGHTGHTS) are compositionally biased toward low complexity. The region spanning 147-313 (TDILVRHQSF…FDNCPLLTIP (167 aa)) is the Helicase ATP-binding domain. Position 160 to 167 (160 to 167 (GETGSGKT)) interacts with ATP. The short motif at 260–263 (DEAH) is the DEAH box element. The Helicase C-terminal domain maps to 338 to 518 (TVIQIHMCEE…SVVLQLKKLG (181 aa)). An N6-acetyllysine modification is found at Lys-488. A Glycyl lysine isopeptide (Lys-Gly) (interchain with G-Cter in SUMO2) cross-link involves residue Lys-786.

It belongs to the DEAD box helicase family. DEAH subfamily. DDX15/PRP43 sub-subfamily. Component of the U11/U12 snRNPs that are part of the U12-type spliceosome. Identified in the Intron Large spliceosome complex (IL, also named intron lariat spliceosome), a post-mRNA release spliceosomal complex containing the excised intron, U2, U5 and U6 snRNPs, and splicing factors; the association may be transient. The IL complex exists in two distinct conformations, one with the DHX15 (ILS2) and one without (ILS1). Interacts with TFIP11 (via G-patch domain); indicative for a recruitment to the IL complex. Interacts with SSB/La. Interacts with GPATCH2 (via G-patch domain); promoting the RNA helicase activity. Interacts with NKRF (via G-patch domain); promoting the RNA helicase activity. Interacts with NLRP6. Ubiquitous.

The protein resides in the nucleus. Its subcellular location is the nucleolus. The catalysed reaction is ATP + H2O = ADP + phosphate + H(+). Its activity is regulated as follows. ATPase activity is enhanced upon binding to G-patch domain-containing proteins. G-patch domain-containing proteins act like a brace that tethers mobile sections of DHX15 together, stabilizing a functional conformation with high RNA affinity, thereby promoting the ATPase activity. In terms of biological role, RNA helicase involved in mRNA processing and antiviral innate immunity. Pre-mRNA processing factor involved in disassembly of spliceosomes after the release of mature mRNA. In cooperation with TFIP11 seem to be involved in the transition of the U2, U5 and U6 snRNP-containing IL complex to the snRNP-free IS complex leading to efficient debranching and turnover of excised introns. Plays a key role in antiviral innate immunity by promoting both MAVS-dependent signaling and NLRP6 inflammasome. Acts as an RNA virus sensor: recognizes and binds viral double stranded RNA (dsRNA) and activates the MAVS-dependent signaling to produce interferon-beta and interferon lambda-3 (IFNL3). Involved in intestinal antiviral innate immunity together with NLRP6: recognizes and binds viral dsRNA and promotes activation of the NLRP6 inflammasome in intestinal epithelial cells to restrict infection by enteric viruses. The NLRP6 inflammasome acts by promoting maturation and secretion of IL18 in the extracellular milieu. Also involved in antibacterial innate immunity by promoting Wnt-induced antimicrobial protein expression in Paneth cells. This Mus musculus (Mouse) protein is ATP-dependent RNA helicase DHX15.